Consider the following 145-residue polypeptide: D-aminoacyl-tRNA deacylase (145 aa).

The Gly-cisPro motif, important for rejection of L-amino acids signature appears at 137–138; that stretch reads GP.

This sequence belongs to the DTD family. As to quaternary structure, homodimer.

The protein resides in the cytoplasm. The catalysed reaction is glycyl-tRNA(Ala) + H2O = tRNA(Ala) + glycine + H(+). It catalyses the reaction a D-aminoacyl-tRNA + H2O = a tRNA + a D-alpha-amino acid + H(+). Its function is as follows. An aminoacyl-tRNA editing enzyme that deacylates mischarged D-aminoacyl-tRNAs. Also deacylates mischarged glycyl-tRNA(Ala), protecting cells against glycine mischarging by AlaRS. Acts via tRNA-based rather than protein-based catalysis; rejects L-amino acids rather than detecting D-amino acids in the active site. By recycling D-aminoacyl-tRNA to D-amino acids and free tRNA molecules, this enzyme counteracts the toxicity associated with the formation of D-aminoacyl-tRNA entities in vivo and helps enforce protein L-homochirality. This chain is D-aminoacyl-tRNA deacylase, found in Yersinia pestis bv. Antiqua (strain Antiqua).